Consider the following 659-residue polypeptide: uncharacterized protein (659 aa).

The signal sequence occupies residues 1–25; it reads MVKRRLSAFGNAFLIYFIIFRLCCC. The Lumenal portion of the chain corresponds to 26 to 556; that stretch reads SPQTSHWCKY…LYQESSFQKR (531 aa). 4 N-linked (GlcNAc...) asparagine glycosylation sites follow: Asn94, Asn111, Asn128, and Asn142. Residues 173-335 enclose the SUN domain; sequence AATIDSNIDE…SLLRVYGKTM (163 aa). Residues Asn393 and Asn415 are each glycosylated (N-linked (GlcNAc...) asparagine). Residues 417–445 form a disordered region; sequence TGKSESYPATSTRSFNDISPSSSSSYSTA. Over residues 423–434 the composition is skewed to polar residues; that stretch reads YPATSTRSFNDI. Residues Asn495 and Asn504 are each glycosylated (N-linked (GlcNAc...) asparagine). Residues 557 to 574 form a helical membrane-spanning segment; the sequence is LLMLQLTVLIVLTVYMAV. Residues 575-659 lie on the Cytoplasmic side of the membrane; sequence SRLPENLPTT…IIHSRSHSVC (85 aa). Disordered stretches follow at residues 580 to 603 and 632 to 659; these read NLPTTRSSSNNPIEASRPPFSRDE and KRDPNTSIRSIHEREQDKIIHSRSHSVC. Residues 581–592 show a composition bias toward polar residues; that stretch reads LPTTRSSSNNPI. The segment covering 641–651 has biased composition (basic and acidic residues); that stretch reads SIHEREQDKII.

The protein belongs to the SLP1 family. As to quaternary structure, interacts with EMP65.

The protein localises to the endoplasmic reticulum membrane. Its function is as follows. May be involved in membrane protein folding. This is an uncharacterized protein from Schizosaccharomyces pombe (strain 972 / ATCC 24843) (Fission yeast).